Reading from the N-terminus, the 233-residue chain is C-type lectin domain-containing protein 87 (233 aa).

The signal sequence occupies residues 1–19 (MRFCLLVAFILPGLFLVHA). Ser-31 carries O-linked (Xyl...) (chondroitin sulfate) serine glycosylation. A glycan (N-linked (GlcNAc...) asparagine) is linked at Asn-81. The C-type lectin domain occupies 93 to 223 (FADSCYWIEK…CTYMLYSICE (131 aa)). 2 disulfide bridges follow: Cys-114/Cys-222 and Cys-193/Cys-214. Asn-225 is a glycosylation site (N-linked (GlcNAc...) asparagine).

The sequence is that of C-type lectin domain-containing protein 87 from Caenorhabditis elegans.